Here is a 902-residue protein sequence, read N- to C-terminus: Translation initiation factor IF-2 (902 aa).

Composition is skewed to basic and acidic residues over residues 1 to 12 (MVDTKTPGDKKL) and 43 to 60 (VVEKRGKRRIGDGPEPHA). Residues 1 to 276 (MVDTKTPGDK…KPGPQKERGR (276 aa)) form a disordered region. Residues 69–84 (PAAPAPSRPAPPPAPP) are compositionally biased toward pro residues. Over residues 111–174 (AKLREVEERR…ETEAKKRFGE (64 aa)) the composition is skewed to basic and acidic residues. Low complexity-rich tracts occupy residues 181-190 (AARPATAAPA) and 198-237 (APAARPGTTTTRPGTTTARPATTTAQRPGAPAGRGPAVAA). Positions 398–567 (TRSPVVTVMG…MIALQADILD (170 aa)) constitute a tr-type G domain. The interval 407-414 (GHVDHGKT) is G1. 407 to 414 (GHVDHGKT) provides a ligand contact to GTP. The segment at 432–436 (GITQH) is G2. Residues 455–458 (DTPG) form a G3 region. GTP contacts are provided by residues 455–459 (DTPGH) and 509–512 (NKID). A G4 region spans residues 509-512 (NKID). The tract at residues 545 to 547 (SAK) is G5.

The protein belongs to the TRAFAC class translation factor GTPase superfamily. Classic translation factor GTPase family. IF-2 subfamily.

It is found in the cytoplasm. One of the essential components for the initiation of protein synthesis. Protects formylmethionyl-tRNA from spontaneous hydrolysis and promotes its binding to the 30S ribosomal subunits. Also involved in the hydrolysis of GTP during the formation of the 70S ribosomal complex. The polypeptide is Translation initiation factor IF-2 (Bradyrhizobium diazoefficiens (strain JCM 10833 / BCRC 13528 / IAM 13628 / NBRC 14792 / USDA 110)).